Reading from the N-terminus, the 375-residue chain is 23S rRNA (uracil(747)-C(5))-methyltransferase RlmC (375 aa).

The [4Fe-4S] cluster site is built by Cys3, Cys11, Cys14, and Cys87. Gln212, Phe241, Glu262, and Asn307 together coordinate S-adenosyl-L-methionine. Residue Cys334 is the Nucleophile of the active site.

It belongs to the class I-like SAM-binding methyltransferase superfamily. RNA M5U methyltransferase family. RlmC subfamily.

The enzyme catalyses uridine(747) in 23S rRNA + S-adenosyl-L-methionine = 5-methyluridine(747) in 23S rRNA + S-adenosyl-L-homocysteine + H(+). Its function is as follows. Catalyzes the formation of 5-methyl-uridine at position 747 (m5U747) in 23S rRNA. This is 23S rRNA (uracil(747)-C(5))-methyltransferase RlmC from Shigella boydii serotype 4 (strain Sb227).